A 1269-amino-acid polypeptide reads, in one-letter code: Clustered mitochondria protein homolog (1269 aa).

Residues 297-552 (PSNNGDFMRT…NTNPVDIEFV (256 aa)) form the Clu domain. The segment covering 958 to 969 (EKKKEESKKAAA) has biased composition (basic and acidic residues). The interval 958–989 (EKKKEESKKAAADGEDAGSSGATSKEEEQAKE) is disordered. 2 TPR repeats span residues 1020–1053 (VSSYLLLSNMYSRLGQYSQAVTFCNKAALLSERC) and 1147–1180 (GQNESRIANLYTSLDDMSHALSHIEKAKSIFSKE). The tract at residues 1211 to 1269 (LASAQQATKPANISQKKGKKSSSSSPALTNKSVDELLQFIEGPGASKSSKKSKKKHTKN) is disordered. Polar residues predominate over residues 1213–1223 (SAQQATKPANI). A compositionally biased stretch (basic residues) spans 1258–1269 (SSKKSKKKHTKN).

It belongs to the CLU family. As to quaternary structure, may associate with the eukaryotic translation initiation factor 3 (eIF-3) complex.

It is found in the cytoplasm. MRNA-binding protein involved in proper cytoplasmic distribution of mitochondria. This is Clustered mitochondria protein homolog from Kluyveromyces lactis (strain ATCC 8585 / CBS 2359 / DSM 70799 / NBRC 1267 / NRRL Y-1140 / WM37) (Yeast).